A 494-amino-acid polypeptide reads, in one-letter code: Cytochrome P450 2B11 (494 aa).

The residue at position 128 (serine 128) is a Phosphoserine; by PKA. Position 436 (cysteine 436) interacts with heme.

The protein belongs to the cytochrome P450 family. The cofactor is heme.

Its subcellular location is the endoplasmic reticulum membrane. The protein resides in the microsome membrane. The catalysed reaction is an organic molecule + reduced [NADPH--hemoprotein reductase] + O2 = an alcohol + oxidized [NADPH--hemoprotein reductase] + H2O + H(+). In terms of biological role, cytochromes P450 are a group of heme-thiolate monooxygenases. In liver microsomes, this enzyme is involved in an NADPH-dependent electron transport pathway. This isozyme seems responsible for metabolism of 2,2',4,4',5,5'-hexachlorobiphenyl. The protein is Cytochrome P450 2B11 (CYP2B11) of Canis lupus familiaris (Dog).